The sequence spans 146 residues: Hemoglobin subunit beta (146 aa).

V1 is subject to N-acetylvaline. A Globin domain is found at 2-146; it reads HLTADEKTAV…VANALAHKYH (145 aa). T12 bears the Phosphothreonine mark. S44 carries the phosphoserine modification. K59 is modified (N6-acetyllysine). Heme b is bound at residue H63. An N6-acetyllysine modification is found at K82. Residue H92 coordinates heme b. Position 93 is an S-nitrosocysteine (C93). K144 carries the N6-acetyllysine modification.

The protein belongs to the globin family. In terms of assembly, heterotetramer of two alpha chains and two beta chains. Red blood cells.

Its function is as follows. Involved in oxygen transport from the lung to the various peripheral tissues. This is Hemoglobin subunit beta (HBB) from Procyon lotor (Raccoon).